We begin with the raw amino-acid sequence, 392 residues long: Protein NirF (392 aa).

It localises to the cytoplasm. Its function is as follows. Required for the biosynthesis of heme d1 of nitrite reductase. Could have a dehydrogenase activity yielding sirohydrochlorin from precorrin-2 or dehydrogenation of propionate side chain C17. This is Protein NirF (nirF) from Pseudomonas aeruginosa (strain ATCC 15692 / DSM 22644 / CIP 104116 / JCM 14847 / LMG 12228 / 1C / PRS 101 / PAO1).